The chain runs to 317 residues: 1D-myo-inositol 2-acetamido-2-deoxy-alpha-D-glucopyranoside deacetylase (317 aa).

Zn(2+)-binding residues include His15, Asp18, and His154. The interval 289–317 is disordered; sequence QDLDNRNPNSQPPADQAREDHLLTGLGFA.

Belongs to the MshB deacetylase family. Requires Zn(2+) as cofactor.

It catalyses the reaction 1D-myo-inositol 2-acetamido-2-deoxy-alpha-D-glucopyranoside + H2O = 1D-myo-inositol 2-amino-2-deoxy-alpha-D-glucopyranoside + acetate. In terms of biological role, catalyzes the deacetylation of 1D-myo-inositol 2-acetamido-2-deoxy-alpha-D-glucopyranoside (GlcNAc-Ins) in the mycothiol biosynthesis pathway. The protein is 1D-myo-inositol 2-acetamido-2-deoxy-alpha-D-glucopyranoside deacetylase of Segniliparus rotundus (strain ATCC BAA-972 / CDC 1076 / CIP 108378 / DSM 44985 / JCM 13578).